A 416-amino-acid polypeptide reads, in one-letter code: MKSYLVGGAVRDALLGQPAGDCDWVVVGADPAHMKSLGFKPVGRDFPVFLHPKTGEEFALARTERKNGHGYRGFIVNADPTVTLEQDLQRRDFTINAIARDQTNGTLIDPYGGVNDLEQRVLRHISPAFAEDPLRVLRAARFMARLAPLGFSIAPETLAMMRQMAANGELNSLIPERIWKELSRSLTYTQPAAFLHTLRTVNALEVVLPELNALYGVPQHADYHPEIDTGLHQELVSDIAAKLAPGDMLIGFAALCHDLGKALTPRATWPHHPMHEQRGMAPTQQLSERLKVPRNYQQLALIACREHLNVHRLSKLHDNTVYELLQRCDAFRRPERIAQLAIVCEADYRGRYGHEDANYPQGQHLCRLHAAALAINARDLNRQDLHGTQIGEALAQARIRAISSAGVYDGGTGTNF.

Positions 8 and 11 each coordinate ATP. The CTP site is built by Gly-8 and Arg-11. Mg(2+) is bound by residues Asp-21 and Asp-23. 3 residues coordinate ATP: Arg-91, Arg-138, and Arg-141. CTP-binding residues include Arg-91, Arg-138, and Arg-141. An HD domain is found at 229–331 (TGLHQELVSD…YELLQRCDAF (103 aa)).

Belongs to the tRNA nucleotidyltransferase/poly(A) polymerase family. Bacterial CCA-adding enzyme type 1 subfamily. Monomer. Can also form homodimers and oligomers. It depends on Mg(2+) as a cofactor. The cofactor is Ni(2+).

It carries out the reaction a tRNA precursor + 2 CTP + ATP = a tRNA with a 3' CCA end + 3 diphosphate. It catalyses the reaction a tRNA with a 3' CCA end + 2 CTP + ATP = a tRNA with a 3' CCACCA end + 3 diphosphate. Its function is as follows. Catalyzes the addition and repair of the essential 3'-terminal CCA sequence in tRNAs without using a nucleic acid template. Adds these three nucleotides in the order of C, C, and A to the tRNA nucleotide-73, using CTP and ATP as substrates and producing inorganic pyrophosphate. tRNA 3'-terminal CCA addition is required both for tRNA processing and repair. Also involved in tRNA surveillance by mediating tandem CCA addition to generate a CCACCA at the 3' terminus of unstable tRNAs. While stable tRNAs receive only 3'-terminal CCA, unstable tRNAs are marked with CCACCA and rapidly degraded. The polypeptide is Multifunctional CCA protein (Xylella fastidiosa (strain M23)).